The primary structure comprises 158 residues: Acetolactate synthase small subunit (158 aa).

The 75-residue stretch at isoleucine 4–glutamine 78 folds into the ACT domain.

This sequence belongs to the acetolactate synthase small subunit family. In terms of assembly, dimer of large and small chains.

It carries out the reaction 2 pyruvate + H(+) = (2S)-2-acetolactate + CO2. The protein operates within amino-acid biosynthesis; L-isoleucine biosynthesis; L-isoleucine from 2-oxobutanoate: step 1/4. It functions in the pathway amino-acid biosynthesis; L-valine biosynthesis; L-valine from pyruvate: step 1/4. This is Acetolactate synthase small subunit (ilvH) from Buchnera aphidicola subsp. Schizaphis graminum (strain Sg).